The chain runs to 487 residues: Bifunctional protein GlmU (487 aa).

The pyrophosphorylase stretch occupies residues 1-235 (MSHSPTPLAA…PEEASGVNDR (235 aa)). UDP-N-acetyl-alpha-D-glucosamine contacts are provided by residues 13–16 (LAAG), lysine 27, glutamine 82, 87–88 (GT), 110–112 (SGD), glycine 147, glutamate 162, asparagine 177, and asparagine 233. Aspartate 112 serves as a coordination point for Mg(2+). Residue asparagine 233 participates in Mg(2+) binding. The interval 236-256 (EELARAGRVLLRRRASELMRS) is linker. Residues 257–487 (GVTIEDPERF…ADSPRGGRAS (231 aa)) form an N-acetyltransferase region. UDP-N-acetyl-alpha-D-glucosamine is bound by residues arginine 339 and lysine 357. The active-site Proton acceptor is the histidine 369. Residues tyrosine 372 and asparagine 383 each contribute to the UDP-N-acetyl-alpha-D-glucosamine site. Acetyl-CoA contacts are provided by residues alanine 386, 392-393 (NY), serine 411, alanine 429, and arginine 446. A disordered region spans residues 453–487 (EGWVARRKAEAQNKGAAEAAPAPSPADSPRGGRAS). Low complexity predominate over residues 468 to 481 (AAEAAPAPSPADSP).

The protein in the N-terminal section; belongs to the N-acetylglucosamine-1-phosphate uridyltransferase family. This sequence in the C-terminal section; belongs to the transferase hexapeptide repeat family. In terms of assembly, homotrimer. Mg(2+) serves as cofactor.

Its subcellular location is the cytoplasm. It catalyses the reaction alpha-D-glucosamine 1-phosphate + acetyl-CoA = N-acetyl-alpha-D-glucosamine 1-phosphate + CoA + H(+). The enzyme catalyses N-acetyl-alpha-D-glucosamine 1-phosphate + UTP + H(+) = UDP-N-acetyl-alpha-D-glucosamine + diphosphate. The protein operates within nucleotide-sugar biosynthesis; UDP-N-acetyl-alpha-D-glucosamine biosynthesis; N-acetyl-alpha-D-glucosamine 1-phosphate from alpha-D-glucosamine 6-phosphate (route II): step 2/2. It participates in nucleotide-sugar biosynthesis; UDP-N-acetyl-alpha-D-glucosamine biosynthesis; UDP-N-acetyl-alpha-D-glucosamine from N-acetyl-alpha-D-glucosamine 1-phosphate: step 1/1. Its pathway is bacterial outer membrane biogenesis; LPS lipid A biosynthesis. Catalyzes the last two sequential reactions in the de novo biosynthetic pathway for UDP-N-acetylglucosamine (UDP-GlcNAc). The C-terminal domain catalyzes the transfer of acetyl group from acetyl coenzyme A to glucosamine-1-phosphate (GlcN-1-P) to produce N-acetylglucosamine-1-phosphate (GlcNAc-1-P), which is converted into UDP-GlcNAc by the transfer of uridine 5-monophosphate (from uridine 5-triphosphate), a reaction catalyzed by the N-terminal domain. The polypeptide is Bifunctional protein GlmU (Anaeromyxobacter sp. (strain Fw109-5)).